The primary structure comprises 251 residues: DNA repair protein RecO (251 aa).

Belongs to the RecO family.

Involved in DNA repair and RecF pathway recombination. The sequence is that of DNA repair protein RecO from Lactococcus lactis subsp. cremoris (strain MG1363).